Here is a 199-residue protein sequence, read N- to C-terminus: Protein-methionine-sulfoxide reductase heme-binding subunit MsrQ (199 aa).

Helical transmembrane passes span 10–30, 82–102, 116–136, and 153–173; these read WLKV…FWAI, LWCF…ELGI, PYLT…LTST, and VVYL…KILS.

It belongs to the MsrQ family. In terms of assembly, heterodimer of a catalytic subunit (MsrP) and a heme-binding subunit (MsrQ). Requires FMN as cofactor. Heme b is required as a cofactor.

The protein localises to the cell inner membrane. Functionally, part of the MsrPQ system that repairs oxidized periplasmic proteins containing methionine sulfoxide residues (Met-O), using respiratory chain electrons. Thus protects these proteins from oxidative-stress damage caused by reactive species of oxygen and chlorine generated by the host defense mechanisms. MsrPQ is essential for the maintenance of envelope integrity under bleach stress, rescuing a wide series of structurally unrelated periplasmic proteins from methionine oxidation, including the primary periplasmic chaperone SurA and the lipoprotein Pal. MsrQ provides electrons for reduction to the reductase catalytic subunit MsrP, using the quinone pool of the respiratory chain. The chain is Protein-methionine-sulfoxide reductase heme-binding subunit MsrQ from Salmonella agona (strain SL483).